The following is a 120-amino-acid chain: Glycine cleavage system H protein (120 aa).

Residues 17–99 form the Lipoyl-binding domain; sequence VATVGITAHA…QGDGWLYRLK (83 aa). Lys58 carries the N6-lipoyllysine modification.

The protein belongs to the GcvH family. In terms of assembly, the glycine cleavage system is composed of four proteins: P, T, L and H. (R)-lipoate serves as cofactor.

Its function is as follows. The glycine cleavage system catalyzes the degradation of glycine. The H protein shuttles the methylamine group of glycine from the P protein to the T protein. In Methylorubrum extorquens (strain PA1) (Methylobacterium extorquens), this protein is Glycine cleavage system H protein.